Consider the following 590-residue polypeptide: Muscarinic acetylcholine receptor M3 (590 aa).

Residues 1 to 67 are Extracellular-facing; the sequence is MTLHNNNTTS…DPLGGHTIWQ (67 aa). 6 N-linked (GlcNAc...) asparagine glycosylation sites follow: Asn6, Asn7, Asn15, Asn41, Asn48, and Asn53. A helical transmembrane segment spans residues 68–91; the sequence is VVFIAFLTGVLALVTIIGNILVIV. Over 92–104 the chain is Cytoplasmic; that stretch reads AFKVNKQLKTVNN. The helical transmembrane segment at 105–125 threads the bilayer; sequence YFLLSLACADLIIGVISMNLF. Residues 126-142 are Extracellular-facing; the sequence is TTYIIMNRWALGNLACD. Cysteines 141 and 221 form a disulfide. Residues 143 to 164 form a helical membrane-spanning segment; it reads LWLSIDYVASNASVMNLLVISF. Residues 165 to 184 lie on the Cytoplasmic side of the membrane; sequence DRYFSITRPLTYRAKRTTKR. Residues 185-207 form a helical membrane-spanning segment; the sequence is AGVMIGLAWVISFILWAPAILFW. Residues 208–229 lie on the Extracellular side of the membrane; the sequence is QYFVGKRTVPPGECFIQFLSEP. Residues 230-252 traverse the membrane as a helical segment; that stretch reads TITFGTAIAAFYMPVTIMTILYW. Topologically, residues 253-492 are cytoplasmic; that stretch reads RIYKETEKRT…LIKEKKAAQT (240 aa). A Basolateral sorting signal motif is present at residues 275–281; it reads AEAENFV. Residues 324–357 are disordered; the sequence is AEQMDQDHSSSDSWNNNDAAASLENSASSDEEDI. Residues 334-345 show a composition bias toward low complexity; the sequence is SDSWNNNDAAAS. The residue at position 385 (Ser385) is a Phosphoserine. A disordered region spans residues 398 to 419; the sequence is SVGLERKPSKLQTQQSMDDGGS. Over residues 407–419 the composition is skewed to polar residues; the sequence is KLQTQQSMDDGGS. The chain crosses the membrane as a helical span at residues 493-513; the sequence is LSAILLAFIITWTPYNIMVLV. The Extracellular segment spans residues 514–527; the sequence is NTFCDSCIPKTYWN. The helical transmembrane segment at 528–547 threads the bilayer; sequence LGYWLCYINSTVNPVCYALC. Residues 548–590 lie on the Cytoplasmic side of the membrane; the sequence is NKTFRNTFKMLLLCQCDKRKRRKQQYQQRQSVIFHKRVPEQAL.

The protein belongs to the G-protein coupled receptor 1 family. Muscarinic acetylcholine receptor subfamily. CHRM3 sub-subfamily. As to quaternary structure, homodimer; the dimers can form tetramers. Interacts with NALCN. Interacts with TMEM147.

The protein resides in the cell membrane. It localises to the postsynaptic cell membrane. The protein localises to the basolateral cell membrane. Its subcellular location is the endoplasmic reticulum membrane. Functionally, the muscarinic acetylcholine receptor mediates various cellular responses, including inhibition of adenylate cyclase, breakdown of phosphoinositides and modulation of potassium channels through the action of G proteins. Primary transducing effect is Pi turnover. The polypeptide is Muscarinic acetylcholine receptor M3 (CHRM3) (Bos taurus (Bovine)).